The primary structure comprises 429 residues: Enolase (429 aa).

A (2R)-2-phosphoglycerate-binding site is contributed by Q174. The active-site Proton donor is the E218. Positions 254, 295, and 321 each coordinate Mg(2+). 4 residues coordinate (2R)-2-phosphoglycerate: K346, R375, S376, and K397. K346 functions as the Proton acceptor in the catalytic mechanism.

It belongs to the enolase family. The cofactor is Mg(2+).

The protein localises to the cytoplasm. The protein resides in the secreted. It is found in the cell surface. The enzyme catalyses (2R)-2-phosphoglycerate = phosphoenolpyruvate + H2O. It participates in carbohydrate degradation; glycolysis; pyruvate from D-glyceraldehyde 3-phosphate: step 4/5. In terms of biological role, catalyzes the reversible conversion of 2-phosphoglycerate (2-PG) into phosphoenolpyruvate (PEP). It is essential for the degradation of carbohydrates via glycolysis. In Methanosarcina acetivorans (strain ATCC 35395 / DSM 2834 / JCM 12185 / C2A), this protein is Enolase.